Reading from the N-terminus, the 141-residue chain is Large ribosomal subunit protein uL11 (141 aa).

The protein belongs to the universal ribosomal protein uL11 family. As to quaternary structure, part of the ribosomal stalk of the 50S ribosomal subunit. Interacts with L10 and the large rRNA to form the base of the stalk. L10 forms an elongated spine to which L12 dimers bind in a sequential fashion forming a multimeric L10(L12)X complex. In terms of processing, one or more lysine residues are methylated.

In terms of biological role, forms part of the ribosomal stalk which helps the ribosome interact with GTP-bound translation factors. The chain is Large ribosomal subunit protein uL11 from Thermotoga sp. (strain RQ2).